A 497-amino-acid chain; its full sequence is Glycogen synthase (497 aa).

K15 is an ADP-alpha-D-glucose binding site.

The protein belongs to the glycosyltransferase 1 family. Bacterial/plant glycogen synthase subfamily.

The catalysed reaction is [(1-&gt;4)-alpha-D-glucosyl](n) + ADP-alpha-D-glucose = [(1-&gt;4)-alpha-D-glucosyl](n+1) + ADP + H(+). It functions in the pathway glycan biosynthesis; glycogen biosynthesis. Functionally, synthesizes alpha-1,4-glucan chains using ADP-glucose. The polypeptide is Glycogen synthase (Thermodesulfovibrio yellowstonii (strain ATCC 51303 / DSM 11347 / YP87)).